A 648-amino-acid chain; its full sequence is NADP-dependent malic enzyme, chloroplastic (648 aa).

The N-terminal 61 residues, methionine 1–alanine 61, are a transit peptide targeting the chloroplast. Residue tyrosine 195 is the Proton donor of the active site. Residue arginine 248 coordinates NAD(+). Lysine 266 (proton acceptor) is an active-site residue. Residues glutamate 339, aspartate 340, and aspartate 363 each coordinate a divalent metal cation. Residue aspartate 363 participates in NAD(+) binding. Leucine 392–alanine 408 provides a ligand contact to NADP(+). Asparagine 504 is a binding site for NAD(+).

Belongs to the malic enzymes family. In terms of assembly, homotetramer. Requires Mg(2+) as cofactor. The cofactor is Mn(2+).

Its subcellular location is the plastid. The protein localises to the chloroplast. It catalyses the reaction (S)-malate + NADP(+) = pyruvate + CO2 + NADPH. The enzyme catalyses oxaloacetate + H(+) = pyruvate + CO2. Its pathway is photosynthesis; C4 acid pathway. Functionally, the chloroplastic ME isoform decarboxylates malate shuttled from neighboring mesophyll cells. The CO(2) released is then refixed by ribulose-bisphosphate carboxylase. This pathway eliminates the photorespiratory loss of CO(2) that occurs in most plants. This Flaveria trinervia (Clustered yellowtops) protein is NADP-dependent malic enzyme, chloroplastic (MOD1).